A 168-amino-acid polypeptide reads, in one-letter code: Lipoprotein signal peptidase (168 aa).

Helical transmembrane passes span 57–77 (PKEV…LYVF) and 86–106 (FILP…DRIT). Active-site residues include aspartate 112 and aspartate 138. Residues 131-151 (WPIFNIADSAITIGACLLILF) form a helical membrane-spanning segment.

The protein belongs to the peptidase A8 family.

It is found in the cell inner membrane. It catalyses the reaction Release of signal peptides from bacterial membrane prolipoproteins. Hydrolyzes -Xaa-Yaa-Zaa-|-(S,diacylglyceryl)Cys-, in which Xaa is hydrophobic (preferably Leu), and Yaa (Ala or Ser) and Zaa (Gly or Ala) have small, neutral side chains.. The protein operates within protein modification; lipoprotein biosynthesis (signal peptide cleavage). Functionally, this protein specifically catalyzes the removal of signal peptides from prolipoproteins. The sequence is that of Lipoprotein signal peptidase from Chlorobium phaeobacteroides (strain DSM 266 / SMG 266 / 2430).